We begin with the raw amino-acid sequence, 506 residues long: MPDTTPQLRLYNTLTRTKEAFAPIDAKNVRMYVCGPTVYDFAHIGNARPVIVFDVLFRLLRHVYGAQHVTYARNITDVDDKINARAARDYPDLPFNEAIRKVTESTNAQFQADVTALGNLQPTVQPRATEHMDEMRAMIDRLVQRGVAYVAQDHVLFSPSAMNARKGPRYGALARRSLDEMLAGARVDVASYKRDEMDFVLWKPSKKGEPGWPSPAGIETLGRPGWHIECSAMSMAKLLEPFGGGLKCDDPERNQFDIHGGGIDLVFPHHENEIAQSCCALGTERMANIWMHNGFLQVEGQKMSKSLGNFITIRDVLNDGLPQLGEWGDNTVRDRWAGLAARLSMLQTHYREPINWTAQRLAESADELHRWYGLLRDEGFGAPEKLSHASAVAAALCDDLNSWAAITALRQAFKVRDVAALGEGMALMGLLDPYFVTASDVPIFARADVDASAIAARIAERLNFINAKNWAEADRIRDELLQEGVQLKDSKDPATGERITTWDVVG.

A Zn(2+)-binding site is contributed by Cys34. A 'HIGH' region motif is present at residues Pro36–Asn46. Residues Cys230, His269, and Glu273 each coordinate Zn(2+). The 'KMSKS' region signature appears at Lys302 to Ser306. Position 305 (Lys305) interacts with ATP.

The protein belongs to the class-I aminoacyl-tRNA synthetase family. Monomer. Zn(2+) serves as cofactor.

It is found in the cytoplasm. The catalysed reaction is tRNA(Cys) + L-cysteine + ATP = L-cysteinyl-tRNA(Cys) + AMP + diphosphate. This chain is Cysteine--tRNA ligase, found in Brucella melitensis biotype 2 (strain ATCC 23457).